The following is a 577-amino-acid chain: NKAP family protein UM04995 (577 aa).

The segment at 1-479 is disordered; sequence MPTLAERLGS…YGGALLPGEG (479 aa). A compositionally biased stretch (basic and acidic residues) spans 20 to 31; sequence KSSHDREQELRS. The span at 36–49 shows a compositional bias: polar residues; it reads SKQTSRNTAHQDLA. Residues 50-60 are compositionally biased toward basic and acidic residues; the sequence is SSERRSIDREL. A compositionally biased stretch (low complexity) spans 70-89; the sequence is SPLSSPQNGSSPRRQRGSPS. Basic and acidic residues-rich tracts occupy residues 127–163, 170–193, and 265–297; these read PRED…DSRR, SGDR…REAP, and DSSS…DKHH. Composition is skewed to basic residues over residues 298-316 and 325-336; these read SSSR…RRSS and SRHRHTRSSRSH. Acidic residues predominate over residues 340-350; the sequence is DDDDDDDEDVD. Positions 363-385 are enriched in basic and acidic residues; that stretch reads KVSDGSDSGRSESETDSDSDARS. Residues 386-395 show a composition bias toward basic residues; the sequence is SRHRRRHHKS. Basic and acidic residues-rich tracts occupy residues 396-408 and 417-439; these read DRSS…ESEK and SESE…RRDS. A coiled-coil region spans residues 529 to 570; sequence RKENQVISAEEKRTMLRLQAEEKAKKEREIVSQFKELVDTLQ.

It belongs to the NKAP family.

The polypeptide is NKAP family protein UM04995 (Mycosarcoma maydis (Corn smut fungus)).